The chain runs to 207 residues: Hepatic lectin (207 aa).

The residue at position 1 (Met-1) is an N-acetylmethionine. Topologically, residues 1–23 (MDEERLSDNVRLYKGGSIRQGLR) are cytoplasmic. A helical; Signal-anchor for type II membrane protein transmembrane segment spans residues 24 to 48 (SFAAVYVLLALSFLLLTLLSSVSLA). Topologically, residues 49 to 207 (RIAALSSKLS…YYVCEKPLPK (159 aa)) are extracellular. The N-linked (GlcNAc...) asparagine glycan is linked to Asn-67. In terms of domain architecture, C-type lectin spans 77-203 (PCGAQSRQWE…TYECYYVCEK (127 aa)). Disulfide bonds link Cys-78–Cys-92, Cys-109–Cys-201, and Cys-179–Cys-193.

Some or all of the cysteines are involved in disulfide bonds.

It localises to the membrane. Its function is as follows. Hepatic lectin is a membrane receptor protein that recognizes and binds exposed N-acetylglucosamine moieties of plasma glycoproteins, thus mediating their clearance (from the circulation) and endocytosis. The protein is Hepatic lectin of Gallus gallus (Chicken).